The sequence spans 310 residues: Epoxyqueuosine reductase (310 aa).

D133 (proton donor) is an active-site residue. The 30-residue stretch at 179 to 208 (YDNPSDKDYCGTCTRCVDACPTDAILQDNL) folds into the 4Fe-4S ferredoxin-type domain. 8 residues coordinate [4Fe-4S] cluster: C188, C191, C194, C198, C214, C241, C244, and C248.

It belongs to the QueG family. As to quaternary structure, monomer. It depends on cob(II)alamin as a cofactor. Requires [4Fe-4S] cluster as cofactor.

Its subcellular location is the cytoplasm. It catalyses the reaction epoxyqueuosine(34) in tRNA + AH2 = queuosine(34) in tRNA + A + H2O. It functions in the pathway tRNA modification; tRNA-queuosine biosynthesis. Its function is as follows. Catalyzes the conversion of epoxyqueuosine (oQ) to queuosine (Q), which is a hypermodified base found in the wobble positions of tRNA(Asp), tRNA(Asn), tRNA(His) and tRNA(Tyr). The sequence is that of Epoxyqueuosine reductase from Cyclobacterium marinum (strain ATCC 25205 / DSM 745 / LMG 13164 / NCIMB 1802) (Flectobacillus marinus).